The following is a 258-amino-acid chain: Chymotrypsin-like elastase family member 1 (258 aa).

Residues methionine 1 to serine 8 form the signal peptide. A propeptide spans threonine 9 to arginine 18 (activation peptide). The Peptidase S1 domain maps to valine 19–alanine 256. A disulfide bridge connects residues cysteine 48 and cysteine 64. Histidine 63 (charge relay system) is an active-site residue. Ca(2+)-binding residues include aspartate 77, asparagine 79, glutamine 82, and glutamate 87. N-linked (GlcNAc...) asparagine glycosylation occurs at asparagine 79. The active-site Charge relay system is aspartate 111. Intrachain disulfides connect cysteine 145–cysteine 212, cysteine 176–cysteine 192, and cysteine 202–cysteine 232. Serine 206 functions as the Charge relay system in the catalytic mechanism. Residue asparagine 233 is glycosylated (N-linked (GlcNAc...) asparagine).

Belongs to the peptidase S1 family. Elastase subfamily. The cofactor is Ca(2+). Basal layers of epidermis (at protein level). Not expressed in the pancreas.

It is found in the secreted. The enzyme catalyses Hydrolysis of proteins, including elastin. Preferential cleavage: Ala-|-Xaa.. Serine proteases that hydrolyze many proteins in addition to elastin. This chain is Chymotrypsin-like elastase family member 1 (CELA1), found in Homo sapiens (Human).